The following is a 379-amino-acid chain: Alcohol dehydrogenase 1 (379 aa).

Residues C47, T49, H69, C99, C102, C105, C113, and C177 each contribute to the Zn(2+) site. Residues T49 and H69 each coordinate an alcohol. T49 lines the NAD(+) pocket. NAD(+) contacts are provided by residues 202–207, D226, R231, T272, V295, 295–297, F322, and R372; these read GLGAVG and VGV.

This sequence belongs to the zinc-containing alcohol dehydrogenase family. In terms of assembly, homodimer. The cofactor is Zn(2+).

The protein localises to the cytoplasm. It catalyses the reaction a primary alcohol + NAD(+) = an aldehyde + NADH + H(+). The enzyme catalyses a secondary alcohol + NAD(+) = a ketone + NADH + H(+). The sequence is that of Alcohol dehydrogenase 1 (ADH1) from Hordeum vulgare (Barley).